Here is a 291-residue protein sequence, read N- to C-terminus: DegV domain-containing protein CPE0026 (291 aa).

The region spanning 4 to 286 (FVIFTDSAAD…IGTLAVFFLG (283 aa)) is the DegV domain. Residues Thr-63 and Ser-95 each coordinate hexadecanoate.

Its function is as follows. May bind long-chain fatty acids, such as palmitate, and may play a role in lipid transport or fatty acid metabolism. This Clostridium perfringens (strain 13 / Type A) protein is DegV domain-containing protein CPE0026.